The chain runs to 203 residues: Small ribosomal subunit protein uS4 (203 aa).

Positions 93–154 (RRLDNVVYRC…KSRNLDAVAD (62 aa)) constitute an S4 RNA-binding domain.

It belongs to the universal ribosomal protein uS4 family. As to quaternary structure, part of the 30S ribosomal subunit. Contacts protein S5. The interaction surface between S4 and S5 is involved in control of translational fidelity.

One of the primary rRNA binding proteins, it binds directly to 16S rRNA where it nucleates assembly of the body of the 30S subunit. In terms of biological role, with S5 and S12 plays an important role in translational accuracy. This chain is Small ribosomal subunit protein uS4, found in Chlorobaculum tepidum (strain ATCC 49652 / DSM 12025 / NBRC 103806 / TLS) (Chlorobium tepidum).